A 182-amino-acid chain; its full sequence is Ribosome maturation factor RimM (182 aa).

In terms of domain architecture, PRC barrel spans 103-182; sequence DGSYYWKDLM…TIEVDWDPGF (80 aa).

This sequence belongs to the RimM family. Binds ribosomal protein uS19.

The protein resides in the cytoplasm. An accessory protein needed during the final step in the assembly of 30S ribosomal subunit, possibly for assembly of the head region. Essential for efficient processing of 16S rRNA. May be needed both before and after RbfA during the maturation of 16S rRNA. It has affinity for free ribosomal 30S subunits but not for 70S ribosomes. This Citrobacter koseri (strain ATCC BAA-895 / CDC 4225-83 / SGSC4696) protein is Ribosome maturation factor RimM.